A 959-amino-acid chain; its full sequence is Xylosyltransferase 1 (959 aa).

Residues 1–17 (MVAAPCARRLARRSHSA) lie on the Cytoplasmic side of the membrane. A helical; Signal-anchor for type II membrane protein transmembrane segment spans residues 18–38 (LLAALTVLLLQTLVVWNFSSL). Residues 39-959 (DSGAGERRGG…GAVKPDGRLR (921 aa)) lie on the Lumenal side of the membrane. The interval 42-259 (AGERRGGAAV…KYDQPPKCDI (218 aa)) is disordered. Residues 78–104 (RGGGGGGGGGGGGRGPQARARGGGPGE) show a composition bias toward gly residues. The segment covering 145–161 (KVRTDSNNENSVPKDFE) has biased composition (basic and acidic residues). Positions 163 to 172 (VDNSNFAPRT) are enriched in polar residues. The segment covering 177–204 (HQPELAKKPPSRQKELLKRKLEQQEKGK) has biased composition (basic and acidic residues). N-linked (GlcNAc...) asparagine glycosylation occurs at asparagine 226. Residues 249-259 (TKYDQPPKCDI) are compositionally biased toward basic and acidic residues. 4 cysteine pairs are disulfide-bonded: cysteine 257–cysteine 285, cysteine 301–cysteine 542, cysteine 561–cysteine 574, and cysteine 563–cysteine 572. UDP-alpha-D-xylose contacts are provided by residues valine 333, aspartate 361, and 390-392 (TIW). A glycan (N-linked (GlcNAc...) asparagine) is linked at asparagine 421. 494–495 (DW) contacts UDP-alpha-D-xylose. UDP-alpha-D-xylose is bound by residues serine 575 and 598–599 (RK). Disulfide bonds link cysteine 675/cysteine 927 and cysteine 920/cysteine 933. A glycan (N-linked (GlcNAc...) asparagine) is linked at asparagine 777. The tract at residues 940–959 (SFSPDPKSELGAVKPDGRLR) is disordered.

This sequence belongs to the glycosyltransferase 14 family. XylT subfamily. Monomer. Requires a divalent metal cation as cofactor. Contains 7 disulfide bonds. In terms of processing, N-glycosylated. Widely expressed. Expressed at higher level in placenta, kidney and pancreas. Weakly expressed in skeletal muscle.

Its subcellular location is the golgi apparatus membrane. It is found in the secreted. It carries out the reaction UDP-alpha-D-xylose + L-seryl-[protein] = 3-O-(beta-D-xylosyl)-L-seryl-[protein] + UDP + H(+). Its pathway is glycan metabolism; chondroitin sulfate biosynthesis. The protein operates within glycan metabolism; heparan sulfate biosynthesis. Its function is as follows. Catalyzes the first step in the biosynthesis of chondroitin sulfate and dermatan sulfate proteoglycans, such as DCN. Transfers D-xylose from UDP-D-xylose to specific serine residues of the core protein. Required for normal embryonic and postnatal skeleton development, especially of the long bones. Required for normal maturation of chondrocytes during bone development, and normal onset of ossification. In Homo sapiens (Human), this protein is Xylosyltransferase 1 (XYLT1).